A 99-amino-acid polypeptide reads, in one-letter code: Class II hydrophobin 1 (99 aa).

The first 26 residues, 1–26 (MKFIAVVAALTASLAMAAPTESSTDT), serve as a signal peptide directing secretion. 4 disulfides stabilise this stretch: cysteine 31–cysteine 80, cysteine 41–cysteine 71, cysteine 42–cysteine 54, and cysteine 81–cysteine 92.

It belongs to the cerato-ulmin hydrophobin family. In terms of assembly, homotetramer. Further self-assembles to form highly ordered films at water-air interfaces through intermolecular interactions.

Its subcellular location is the secreted. The protein localises to the cell wall. Aerial growth, conidiation, and dispersal of filamentous fungi in the environment rely upon a capability of their secreting small amphipathic proteins called hydrophobins (HPBs) with low sequence identity. Class I can self-assemble into an outermost layer of rodlet bundles on aerial cell surfaces, conferring cellular hydrophobicity that supports fungal growth, development and dispersal; whereas Class II form highly ordered films at water-air interfaces through intermolecular interactions but contribute nothing to the rodlet structure. HFB1 is a class II hydrophobin that shows antifungal activity against pathogenic and opportunistic fungi such as Cryptococcus neoformans, Nakaseomyces glabrataa, or Candida tropicalis. This chain is Class II hydrophobin 1, found in Sodiomyces alkalinus (strain CBS 110278 / VKM F-3762 / F11) (Alkaliphilic filamentous fungus).